Consider the following 601-residue polypeptide: Beta-phellandrene synthase (601 aa).

Residues 1–35 (MSTISIHHVGILRNPLPSKNKRALINNPWSLSLPR) constitute a chloroplast transit peptide. Mn(2+) contacts are provided by Asp356 and Asp360. The short motif at 356-360 (DDVYD) is the DDXXD motif element. Homodimerization stretches follow at residues 362-368 (YGTLDEL) and 434-471 (EAKW…LSIP). Asp499 and Glu507 together coordinate Mn(2+).

It belongs to the terpene synthase family. Homodimer. It depends on Mn(2+) as a cofactor. Requires Mg(2+) as cofactor. In terms of tissue distribution, expressed in peltate glandular trichomes. Present at low levels in flowers, leaves and stems.

The protein resides in the plastid. It localises to the chloroplast. It carries out the reaction (2E)-geranyl diphosphate = beta-phellandrene + diphosphate. It catalyses the reaction (2E)-geranyl diphosphate = (1R,5R)-sabinene + diphosphate. It participates in secondary metabolite biosynthesis; terpenoid biosynthesis. Its function is as follows. Involved in the biosynthesis of phenolic monoterpenes natural products. Monoterpene synthase that catalyzes mainly the formation of olefins such as sabinene and beta-phellandrene, and minor amounts of other monoterpenes (e.g. myrcene, gamma-terpinene, alpha-thujene and alpha-pinene) from geranyl diphosphate (GPP). This is Beta-phellandrene synthase from Origanum vulgare (Wild marjoram).